The sequence spans 229 residues: ATP synthase subunit a (229 aa).

6 consecutive transmembrane segments (helical) span residues 25–45 (ADAVVYTWLIMIGLVVLSIAA), 82–102 (FFPLVATLALFILVSNLIGLV), 104–124 (GFFPPTANINTTAACAVVVFV), 142–162 (FLGPIAWLAPMMFFIEVIGHL), 181–201 (LVLIIFFGLAPFIVPLPMMLM), and 202–222 (GVLVSFIQAFVFMLLAMIYIQ).

It belongs to the ATPase A chain family. F-type ATPases have 2 components, CF(1) - the catalytic core - and CF(0) - the membrane proton channel. CF(1) has five subunits: alpha(3), beta(3), gamma(1), delta(1), epsilon(1). CF(0) has three main subunits: a(1), b(2) and c(9-12). The alpha and beta chains form an alternating ring which encloses part of the gamma chain. CF(1) is attached to CF(0) by a central stalk formed by the gamma and epsilon chains, while a peripheral stalk is formed by the delta and b chains.

The protein localises to the cell inner membrane. Functionally, key component of the proton channel; it plays a direct role in the translocation of protons across the membrane. This is ATP synthase subunit a from Citrifermentans bemidjiense (strain ATCC BAA-1014 / DSM 16622 / JCM 12645 / Bem) (Geobacter bemidjiensis).